Here is a 369-residue protein sequence, read N- to C-terminus: MKETRRKRILLTGGGTGGHLFPAIAAAQQFCREYPGAEVLFVGTKRKMDAETLERYGFKGVAINSYGLKGKNMRELVKALLVLPISCLQALFILARFRPDLVLGVGGYVTGPVVAMAKLCRRPTLIHEQNSVPGLANRKLAKLVDRVCVSLPASASCFPADKVVFTGNPVRENLVALAAKAREVKEGVTLLVLGGSQGARSLNRLIVEAFVGVGSESLAGINLIHQTGTKDLAWVKQAYGDAGRDVWVEPFFKDMDAVYSQADILVSRAGATTLAELATLGKPVILVPYPFAADNHQQKNAEYYVQGGGALLFKESELTAPQLVEAVISIATNREQRERMEFNQRRLAPTDAAGKIVAVCRQLINRDEL.

UDP-N-acetyl-alpha-D-glucosamine contacts are provided by residues 16–18 (TGG), Asn-130, Arg-171, Ser-196, and Gln-297.

Belongs to the glycosyltransferase 28 family. MurG subfamily.

The protein resides in the cell inner membrane. It catalyses the reaction di-trans,octa-cis-undecaprenyl diphospho-N-acetyl-alpha-D-muramoyl-L-alanyl-D-glutamyl-meso-2,6-diaminopimeloyl-D-alanyl-D-alanine + UDP-N-acetyl-alpha-D-glucosamine = di-trans,octa-cis-undecaprenyl diphospho-[N-acetyl-alpha-D-glucosaminyl-(1-&gt;4)]-N-acetyl-alpha-D-muramoyl-L-alanyl-D-glutamyl-meso-2,6-diaminopimeloyl-D-alanyl-D-alanine + UDP + H(+). It participates in cell wall biogenesis; peptidoglycan biosynthesis. Functionally, cell wall formation. Catalyzes the transfer of a GlcNAc subunit on undecaprenyl-pyrophosphoryl-MurNAc-pentapeptide (lipid intermediate I) to form undecaprenyl-pyrophosphoryl-MurNAc-(pentapeptide)GlcNAc (lipid intermediate II). The chain is UDP-N-acetylglucosamine--N-acetylmuramyl-(pentapeptide) pyrophosphoryl-undecaprenol N-acetylglucosamine transferase from Desulfotalea psychrophila (strain LSv54 / DSM 12343).